A 326-amino-acid polypeptide reads, in one-letter code: GATA zinc finger domain-containing protein 21 (326 aa).

Disordered stretches follow at residues 1–102 and 145–238; these read MFRN…NNNN and QNQS…TPER. 2 stretches are compositionally biased toward low complexity: residues 17–102 and 148–164; these read NTNL…NNNN and SSSS…GSSA. The segment covering 165–189 has biased composition (polar residues); that stretch reads LNSINNNNYSPTTSSLNRVRNQYNQ. Residues 193 to 218 show a composition bias toward acidic residues; that stretch reads DEEDDDYDNGAEDGFDYDGDDNEDGS. The GATA-type zinc finger occupies 239-266; that stretch reads CSNCKITHSSYWRRITVNGQKLDFCNAC. Residues 277 to 326 form a disordered region; the sequence is IKESKQRHSIQNIMNQNQEEEEEEREEEEEEEEEEDEEFETLEEEEEDDE. A compositionally biased stretch (acidic residues) spans 294-326; it reads QEEEEEEREEEEEEEEEEDEEFETLEEEEEDDE.

The sequence is that of GATA zinc finger domain-containing protein 21 (gtaU) from Dictyostelium discoideum (Social amoeba).